The sequence spans 202 residues: MSSVYTRPLARLIEQLQRLPGIGPKTAQRLALHLIKRPEADIQALAQALLEAKQQVGLCSVCFHLSAEPVCEICASPQRDNHTICVVADSRDVIAIEKTREYHGKYHVLGGLISPLEGITPEHLHIQPLIQRASQPQVEEVILAINPSIEGETTTLYVGQLLRPFVKVTRIAFGLPVGGDLDYADEMTLARALAGRREIEWQ.

Residues Cys59–Cys74 form a C4-type zinc finger. Residues His82–Pro176 form the Toprim domain.

This sequence belongs to the RecR family.

In terms of biological role, may play a role in DNA repair. It seems to be involved in an RecBC-independent recombinational process of DNA repair. It may act with RecF and RecO. This is Recombination protein RecR from Thermosynechococcus vestitus (strain NIES-2133 / IAM M-273 / BP-1).